We begin with the raw amino-acid sequence, 651 residues long: Acetyl-coenzyme A synthetase (651 aa).

CoA is bound by residues 193–196 (RRGK) and threonine 312. ATP contacts are provided by residues 388–390 (GEP), 412–417 (DTWWQT), aspartate 501, and arginine 516. Serine 524 contributes to the CoA binding site. 3 residues coordinate Mg(2+): valine 538, histidine 540, and valine 543. Position 610 is an N6-acetyllysine (lysine 610).

It belongs to the ATP-dependent AMP-binding enzyme family. It depends on Mg(2+) as a cofactor. Post-translationally, acetylated. Deacetylation by the SIR2-homolog deacetylase activates the enzyme.

It carries out the reaction acetate + ATP + CoA = acetyl-CoA + AMP + diphosphate. In terms of biological role, catalyzes the conversion of acetate into acetyl-CoA (AcCoA), an essential intermediate at the junction of anabolic and catabolic pathways. AcsA undergoes a two-step reaction. In the first half reaction, AcsA combines acetate with ATP to form acetyl-adenylate (AcAMP) intermediate. In the second half reaction, it can then transfer the acetyl group from AcAMP to the sulfhydryl group of CoA, forming the product AcCoA. This is Acetyl-coenzyme A synthetase from Streptomyces coelicolor (strain ATCC BAA-471 / A3(2) / M145).